We begin with the raw amino-acid sequence, 597 residues long: Putative Xaa-Pro dipeptidyl-peptidase (597 aa).

Residues Ser224, Asp336, and His367 each act as charge relay system in the active site.

Belongs to the peptidase S15 family.

The enzyme catalyses Hydrolyzes Xaa-Pro-|- bonds to release unblocked, N-terminal dipeptides from substrates including Ala-Pro-|-p-nitroanilide and (sequentially) Tyr-Pro-|-Phe-Pro-|-Gly-Pro-|-Ile.. This is Putative Xaa-Pro dipeptidyl-peptidase from Bacillus anthracis.